Reading from the N-terminus, the 302-residue chain is Gigasin-6 (302 aa).

The signal sequence occupies residues 1–22 (MSSRNLLYSSVVLFLVLFYCHG). A helical transmembrane segment spans residues 75–95 (ITTDTLFGLGGISALFANILI).

In terms of tissue distribution, component of the organic matrix of calcified shell layers.

Its subcellular location is the membrane. The sequence is that of Gigasin-6 from Magallana gigas (Pacific oyster).